Here is a 577-residue protein sequence, read N- to C-terminus: Arginine--tRNA ligase (577 aa).

A 'HIGH' region motif is present at residues 122–132 (PNVAKEMHVGH).

It belongs to the class-I aminoacyl-tRNA synthetase family. As to quaternary structure, monomer.

It is found in the cytoplasm. The catalysed reaction is tRNA(Arg) + L-arginine + ATP = L-arginyl-tRNA(Arg) + AMP + diphosphate. The chain is Arginine--tRNA ligase from Salmonella schwarzengrund (strain CVM19633).